Consider the following 500-residue polypeptide: Abscisic acid 8'-hydroxylase 3 (500 aa).

Residues 3-23 form a helical membrane-spanning segment; that stretch reads ASFVIVIVISFFISLAFMCYV. Cys426 provides a ligand contact to heme.

Belongs to the cytochrome P450 family. The cofactor is heme.

The protein resides in the membrane. The catalysed reaction is 2-cis-(+)-abscisate + reduced [NADPH--hemoprotein reductase] + O2 = (+)-8'-hydroxyabscisate + oxidized [NADPH--hemoprotein reductase] + H2O + H(+). It participates in plant hormone degradation; abscisic acid degradation. Involved in the oxidative degradation of abscisic acid. The protein is Abscisic acid 8'-hydroxylase 3 (CYP707A7) of Oryza sativa subsp. indica (Rice).